Consider the following 400-residue polypeptide: Argininosuccinate synthase (400 aa).

Residues 11 to 19 (AYSGGLDTS) and Ala38 each bind ATP. L-citrulline contacts are provided by Tyr89 and Ser94. Gly119 contacts ATP. The L-aspartate site is built by Thr121, Asn125, and Asp126. Asn125 lines the L-citrulline pocket. Positions 129, 179, 188, 264, and 276 each coordinate L-citrulline.

The protein belongs to the argininosuccinate synthase family. Type 1 subfamily. In terms of assembly, homotetramer.

The protein resides in the cytoplasm. The enzyme catalyses L-citrulline + L-aspartate + ATP = 2-(N(omega)-L-arginino)succinate + AMP + diphosphate + H(+). The protein operates within amino-acid biosynthesis; L-arginine biosynthesis; L-arginine from L-ornithine and carbamoyl phosphate: step 2/3. This Oleidesulfovibrio alaskensis (strain ATCC BAA-1058 / DSM 17464 / G20) (Desulfovibrio alaskensis) protein is Argininosuccinate synthase.